Consider the following 476-residue polypeptide: MVFNRYALITNCNHKTLGLYYLWFSFLFGIYGFLLSVILRTELYSSSLRIIAQENVNLYNMIFTVHGIIMIFFNIMPGLFGGFGNYYLPILCGSSELAYPRINSISLLLQPIAFILVILSTAAEFGGGTGWTWYPPLSTSLMSLSPVAVDVIVIGLLVSGIASIMSSLNFLTTVMHLRAKGLTLGILSVSTWSLIITSIMLLLTLPVLTGGVLMLLSDLHFNTLFFDPTFAGDPILYQHLLWFFGHPEVYILILPAFGIISHVISTNYSRSLFGNQSMILAMGCIAVLGSVVWVHHMYTTGLEVDTRAFFTSTTILISIPTGTKVFNWLCTYMSTNFGITHSSSLLSLLFICTFTFGGTTGVILGNGAIDVALHDTYYVIAHFHFVLSIGAIIALFTSVSFFQESFFGKTLRENTIIVLWSILFFVGVVLTFLPMHFLGFNVMPRRIPDYPDALNGWNMICSIGSTMTLFGLLIFK.

A helical membrane pass occupies residues 19 to 39 (LYYLWFSFLFGIYGFLLSVIL). Ca(2+) is bound at residue Glu-42. 8 helical membrane-spanning segments follow: residues 61–81 (MIFT…GLFG), 105–125 (ISLL…AAEF), 144–164 (LSPV…IASI), 194–214 (LIIT…GVLM), 240–260 (LLWF…FGII), 278–298 (MILA…HHMY), 309–329 (FFTS…FNWL), and 345–365 (LLSL…VILG). Position 66 (His-66) interacts with Fe(II)-heme a. Residue His-246 coordinates Cu cation. Positions 246-250 (HPEVY) form a cross-link, 1'-histidyl-3'-tyrosine (His-Tyr). Tyr-250 provides a ligand contact to O2. Cu cation-binding residues include His-295 and His-296. Mg(2+) contacts are provided by His-374 and Asp-375. The next 2 helical transmembrane spans lie at 379–399 (VIAH…FTSV) and 415–435 (TIIV…FLPM). His-382 is a binding site for heme a3. His-384 provides a ligand contact to Fe(II)-heme a. Pro-448 is a binding site for Ca(2+). A helical transmembrane segment spans residues 455–475 (NGWNMICSIGSTMTLFGLLIF).

Belongs to the heme-copper respiratory oxidase family. As to quaternary structure, component of the cytochrome c oxidase (complex IV, CIV), a multisubunit enzyme composed of a catalytic core of 3 subunits and several supernumerary subunits. The complex exists as a monomer or a dimer and forms supercomplexes (SCs) in the inner mitochondrial membrane with ubiquinol-cytochrome c oxidoreductase (cytochrome b-c1 complex, complex III, CIII). Heme serves as cofactor. Cu cation is required as a cofactor.

It localises to the mitochondrion inner membrane. The catalysed reaction is 4 Fe(II)-[cytochrome c] + O2 + 8 H(+)(in) = 4 Fe(III)-[cytochrome c] + 2 H2O + 4 H(+)(out). It functions in the pathway energy metabolism; oxidative phosphorylation. Component of the cytochrome c oxidase, the last enzyme in the mitochondrial electron transport chain which drives oxidative phosphorylation. The respiratory chain contains 3 multisubunit complexes succinate dehydrogenase (complex II, CII), ubiquinol-cytochrome c oxidoreductase (cytochrome b-c1 complex, complex III, CIII) and cytochrome c oxidase (complex IV, CIV), that cooperate to transfer electrons derived from NADH and succinate to molecular oxygen, creating an electrochemical gradient over the inner membrane that drives transmembrane transport and the ATP synthase. Cytochrome c oxidase is the component of the respiratory chain that catalyzes the reduction of oxygen to water. Electrons originating from reduced cytochrome c in the intermembrane space (IMS) are transferred via the dinuclear copper A center (CU(A)) of subunit 2 and heme A of subunit 1 to the active site in subunit 1, a binuclear center (BNC) formed by heme A3 and copper B (CU(B)). The BNC reduces molecular oxygen to 2 water molecules using 4 electrons from cytochrome c in the IMS and 4 protons from the mitochondrial matrix. This is Cytochrome c oxidase subunit 1 (COI) from Plasmodium chabaudi.